The primary structure comprises 875 residues: Leucine--tRNA ligase (875 aa).

Polar residues predominate over residues 1-20; the sequence is MPSAGSVNAANPAVDTSAQT. The disordered stretch occupies residues 1–22; it reads MPSAGSVNAANPAVDTSAQTGR. The 'HIGH' region signature appears at 60–70; the sequence is PYPSGSLHMGH. The short motif at 634–638 is the 'KMSKS' region element; the sequence is KMSKS. K637 is an ATP binding site.

This sequence belongs to the class-I aminoacyl-tRNA synthetase family.

It is found in the cytoplasm. The enzyme catalyses tRNA(Leu) + L-leucine + ATP = L-leucyl-tRNA(Leu) + AMP + diphosphate. The sequence is that of Leucine--tRNA ligase from Synechococcus sp. (strain CC9605).